We begin with the raw amino-acid sequence, 873 residues long: Alanine--tRNA ligase (873 aa).

Residues His-562, His-566, Cys-664, and His-668 each contribute to the Zn(2+) site.

This sequence belongs to the class-II aminoacyl-tRNA synthetase family. It depends on Zn(2+) as a cofactor.

It is found in the cytoplasm. The catalysed reaction is tRNA(Ala) + L-alanine + ATP = L-alanyl-tRNA(Ala) + AMP + diphosphate. Functionally, catalyzes the attachment of alanine to tRNA(Ala) in a two-step reaction: alanine is first activated by ATP to form Ala-AMP and then transferred to the acceptor end of tRNA(Ala). Also edits incorrectly charged Ser-tRNA(Ala) and Gly-tRNA(Ala) via its editing domain. This Shewanella amazonensis (strain ATCC BAA-1098 / SB2B) protein is Alanine--tRNA ligase.